We begin with the raw amino-acid sequence, 184 residues long: dITP/XTP pyrophosphatase (184 aa).

8–13 (TGNKGK) contributes to the substrate binding site. 2 residues coordinate Mg(2+): Glu-37 and Asp-66. Catalysis depends on Asp-66, which acts as the Proton acceptor. Substrate-binding positions include Ser-67, 142-145 (FGYD), Lys-163, and 168-169 (HR).

This sequence belongs to the HAM1 NTPase family. As to quaternary structure, homodimer. Requires Mg(2+) as cofactor.

It catalyses the reaction XTP + H2O = XMP + diphosphate + H(+). The enzyme catalyses dITP + H2O = dIMP + diphosphate + H(+). It carries out the reaction ITP + H2O = IMP + diphosphate + H(+). Functionally, pyrophosphatase that catalyzes the hydrolysis of nucleoside triphosphates to their monophosphate derivatives, with a high preference for the non-canonical purine nucleotides XTP (xanthosine triphosphate), dITP (deoxyinosine triphosphate) and ITP. Seems to function as a house-cleaning enzyme that removes non-canonical purine nucleotides from the nucleotide pool, thus preventing their incorporation into DNA/RNA and avoiding chromosomal lesions. The chain is dITP/XTP pyrophosphatase from Methanosarcina mazei (strain ATCC BAA-159 / DSM 3647 / Goe1 / Go1 / JCM 11833 / OCM 88) (Methanosarcina frisia).